Consider the following 139-residue polypeptide: Aspartate 1-decarboxylase (139 aa).

The active-site Schiff-base intermediate with substrate; via pyruvic acid is Ser25. Ser25 bears the Pyruvic acid (Ser) mark. Thr57 is a substrate binding site. The Proton donor role is filled by Tyr58. 73-75 (GAA) is a substrate binding site. Residues 117 to 139 (TGSDPADAPAGSGLLRGDRPAGR) are disordered.

This sequence belongs to the PanD family. In terms of assembly, heterooctamer of four alpha and four beta subunits. Pyruvate is required as a cofactor. Post-translationally, is synthesized initially as an inactive proenzyme, which is activated by self-cleavage at a specific serine bond to produce a beta-subunit with a hydroxyl group at its C-terminus and an alpha-subunit with a pyruvoyl group at its N-terminus.

The protein resides in the cytoplasm. It carries out the reaction L-aspartate + H(+) = beta-alanine + CO2. It participates in cofactor biosynthesis; (R)-pantothenate biosynthesis; beta-alanine from L-aspartate: step 1/1. Functionally, catalyzes the pyruvoyl-dependent decarboxylation of aspartate to produce beta-alanine. The protein is Aspartate 1-decarboxylase of Nocardioides sp. (strain ATCC BAA-499 / JS614).